The chain runs to 135 residues: Race-specific elicitor A4 (135 aa).

The N-terminal stretch at 1 to 18 (MHYTTLLLSTLLVGTALA) is a signal peptide. A propeptide spanning residues 19–29 (QPTNPPAKTPK) is cleaved from the precursor. The interval 19–39 (QPTNPPAKTPKKAPKTQPYNP) is disordered. The region spanning 47–111 (DTKCMGPKDC…DYPNLSTCPV (65 aa)) is the Chitin-binding type-2 domain. A disulfide bridge links Cys86 with Cys101. The disordered stretch occupies residues 112–135 (KTPQPKPKKGGVGGKKASVGHPGY).

This necrosis-inducing peptide induces a hypersensitive response on Cf-4 tomato genotypes. Race-specific elicitors are compounds which only induce defense responses in genotypes of host plants which are resistant to the pathogenic race that produces the elicitor, but not in susceptible genotypes. This chain is Race-specific elicitor A4 (AVR4), found in Passalora fulva (Tomato leaf mold).